The following is a 299-amino-acid chain: Acetylglutamate kinase (299 aa).

Substrate contacts are provided by residues 70-71, Arg92, and Asn197; that span reads GG.

The protein belongs to the acetylglutamate kinase family. ArgB subfamily.

It is found in the cytoplasm. It carries out the reaction N-acetyl-L-glutamate + ATP = N-acetyl-L-glutamyl 5-phosphate + ADP. It participates in amino-acid biosynthesis; L-arginine biosynthesis; N(2)-acetyl-L-ornithine from L-glutamate: step 2/4. Its function is as follows. Catalyzes the ATP-dependent phosphorylation of N-acetyl-L-glutamate. The protein is Acetylglutamate kinase of Acidiphilium cryptum (strain JF-5).